The sequence spans 574 residues: Avenacosidase 1 (574 aa).

The N-terminal 55 residues, 1 to 55, are a transit peptide targeting the chloroplast; that stretch reads MALLCSALSNSTHPSFRSHIGANSENLWHLSADPAQKSKRRCNLTLSSRAARISS. Residues Q88, H192, and 237–238 contribute to the a beta-D-glucoside site; that span reads NE. The active-site Proton donor is the E238. A disulfide bridge connects residues C258 and C264. Residues Y381, E454, W505, 512-513, and F521 contribute to the a beta-D-glucoside site; that span reads EW. E454 (nucleophile) is an active-site residue.

It belongs to the glycosyl hydrolase 1 family. In terms of assembly, homo- and heteromultimer with P60B in a 1:1 stoichiometry. Aggregates to form the fibrillar stromacentre. As to expression, expressed in caryopses, coleoptiles, primary leaves, and etiolated and green seedlings, but not in roots.

Its subcellular location is the plastid. The protein localises to the chloroplast stroma. The catalysed reaction is avenacoside B + H2O = 26-desgluco-avenacoside B + D-glucose. Its activity is regulated as follows. Inhibited by N-(3-Dimethylaminopropyl)-N'-ethylcarbodiimide hydrochloride (EDC). Functionally, beta-glucosidase acting as a preformed defense system. Hydrolyzes the bisdesmosides avenacosides A and B to 26-desgluco-avenacosides exhibiting fungicidal activity. Can use beta-fucoside &gt; beta-glucoside &gt; beta-galactoside &gt; beta-xyloside as substrates, but not alpha-glycosides, beta-thioglucosides and disaccharides. The sequence is that of Avenacosidase 1 (P60A) from Avena sativa (Oat).